Reading from the N-terminus, the 248-residue chain is Ras-related protein Rab-28 (248 aa).

A disordered region spans residues 1-30 (MTTMGEDEAPALPKKSPLPEKIDEADVDDD). Residue 42-50 (GDGASGKTS) coordinates GTP. An Effector region motif is present at residues 64–72 (YHQTLGLDF). GTP is bound by residues 91–95 (DIGGQ), 152–155 (NKTD), and 182–184 (SAK). A disordered region spans residues 227-248 (QSDASYARRSDQSRSTSVCSIT). Residues 239-248 (SRSTSVCSIT) are compositionally biased toward polar residues.

This sequence belongs to the small GTPase superfamily. Rab family. As to expression, expressed in amphid and phasmid ciliated sensory neurons.

It is found in the cell projection. It localises to the cilium membrane. Its subcellular location is the perikaryon. The protein localises to the cytoplasm. The protein resides in the cytoskeleton. It is found in the cilium axoneme. GTPase. Intraflagellar transport (IFT) cargo that undergoes bidirectional IFT along the ciliary axoneme when in active GTP-bound state in amphid and phasmid ciliated sensory neurons. Targeting and function as IFT cargo may depend on the BBSome, an IFT cargo adapter. Does not undergo IFT when in inactive GDP-bound state. May in turn play a role in cilium structure and/or function in ciliated sensory neurons. This Caenorhabditis elegans protein is Ras-related protein Rab-28.